The following is a 134-amino-acid chain: Translation initiation factor 2 subunit beta (134 aa).

Residues 1 to 12 are compositionally biased toward basic and acidic residues; sequence MGYEEQLDRALE. A disordered region spans residues 1 to 32; that stretch reads MGYEEQLDRALEETPDIEGTAARFSVPDPDVR.

The protein belongs to the eIF-2-beta/eIF-5 family. As to quaternary structure, heterotrimer composed of an alpha, a beta and a gamma chain.

Its function is as follows. eIF-2 functions in the early steps of protein synthesis by forming a ternary complex with GTP and initiator tRNA. The polypeptide is Translation initiation factor 2 subunit beta (Natronomonas pharaonis (strain ATCC 35678 / DSM 2160 / CIP 103997 / JCM 8858 / NBRC 14720 / NCIMB 2260 / Gabara) (Halobacterium pharaonis)).